We begin with the raw amino-acid sequence, 397 residues long: Enoyl-[acyl-carrier-protein] reductase [NADH] (397 aa).

Residues 48 to 53 (GASTGY), 74 to 75 (LE), 111 to 112 (DA), and 139 to 140 (LA) contribute to the NAD(+) site. Tyr225 contributes to the substrate binding site. Residue Tyr235 is the Proton donor of the active site. NAD(+) is bound by residues Lys244 and 273–275 (VVT).

Belongs to the TER reductase family. Monomer.

It carries out the reaction a 2,3-saturated acyl-[ACP] + NAD(+) = a (2E)-enoyl-[ACP] + NADH + H(+). It functions in the pathway lipid metabolism; fatty acid biosynthesis. Its function is as follows. Involved in the final reduction of the elongation cycle of fatty acid synthesis (FAS II). Catalyzes the reduction of a carbon-carbon double bond in an enoyl moiety that is covalently linked to an acyl carrier protein (ACP). The polypeptide is Enoyl-[acyl-carrier-protein] reductase [NADH] (Tolumonas auensis (strain DSM 9187 / NBRC 110442 / TA 4)).